We begin with the raw amino-acid sequence, 192 residues long: Adenylate kinase (192 aa).

12 to 17 (GSGKTT) contacts ATP. The NMP stretch occupies residues 34-63 (STGDLLRAQVASGSELGKTIDSFISKGNLV). AMP contacts are provided by residues Thr-35, Arg-40, 61–63 (NLV), 88–91 (GYPR), and Gln-95. The interval 130 to 136 (GRNRGAD) is LID. Arg-131 serves as a coordination point for ATP. The AMP site is built by Arg-133 and Arg-145. Arg-173 provides a ligand contact to ATP.

The protein belongs to the adenylate kinase family. In terms of assembly, monomer.

It is found in the cytoplasm. It carries out the reaction AMP + ATP = 2 ADP. Its pathway is purine metabolism; AMP biosynthesis via salvage pathway; AMP from ADP: step 1/1. Its function is as follows. Catalyzes the reversible transfer of the terminal phosphate group between ATP and AMP. Plays an important role in cellular energy homeostasis and in adenine nucleotide metabolism. This is Adenylate kinase from Campylobacter jejuni subsp. doylei (strain ATCC BAA-1458 / RM4099 / 269.97).